The sequence spans 455 residues: Pup--protein ligase (455 aa).

E10 provides a ligand contact to Mg(2+). Position 55 (R55) interacts with ATP. A Mg(2+)-binding site is contributed by Y57. Catalysis depends on D59, which acts as the Proton acceptor. E65 is a binding site for Mg(2+). ATP contacts are provided by T68 and W422.

This sequence belongs to the Pup ligase/Pup deamidase family. Pup-conjugating enzyme subfamily.

The catalysed reaction is ATP + [prokaryotic ubiquitin-like protein]-L-glutamate + [protein]-L-lysine = ADP + phosphate + N(6)-([prokaryotic ubiquitin-like protein]-gamma-L-glutamyl)-[protein]-L-lysine.. It functions in the pathway protein degradation; proteasomal Pup-dependent pathway. Its pathway is protein modification; protein pupylation. In terms of biological role, catalyzes the covalent attachment of the prokaryotic ubiquitin-like protein modifier Pup to the proteasomal substrate proteins, thereby targeting them for proteasomal degradation. This tagging system is termed pupylation. The ligation reaction involves the side-chain carboxylate of the C-terminal glutamate of Pup and the side-chain amino group of a substrate lysine. The polypeptide is Pup--protein ligase (Sanguibacter keddieii (strain ATCC 51767 / DSM 10542 / NCFB 3025 / ST-74)).